Reading from the N-terminus, the 91-residue chain is Cytochrome b-c1 complex subunit 6, mitochondrial (91 aa).

The transit peptide at 1–13 (MGLEDEQKMLTES) directs the protein to the mitochondrion. Residues 1 to 30 (MGLEDEQKMLTESGDPEEEEEEEEELVDPL) are disordered. The span at 14–27 (GDPEEEEEEEEELV) shows a compositional bias: acidic residues. Intrachain disulfides connect Cys-37-Cys-81 and Cys-53-Cys-67. N6-acetyllysine is present on Lys-42. Lys-85 is modified (N6-acetyllysine).

It belongs to the UQCRH/QCR6 family. As to quaternary structure, component of the ubiquinol-cytochrome c oxidoreductase (cytochrome b-c1 complex, complex III, CIII), a multisubunit enzyme composed of 11 subunits. The complex is composed of 3 respiratory subunits cytochrome b, cytochrome c1 and Rieske protein UQCRFS1, 2 core protein subunits UQCRC1/QCR1 and UQCRC2/QCR2, and 6 low-molecular weight protein subunits UQCRH/QCR6, UQCRB/QCR7, UQCRQ/QCR8, UQCR10/QCR9, UQCR11/QCR10 and subunit 9, the cleavage product of Rieske protein UQCRFS1. The complex exists as an obligatory dimer and forms supercomplexes (SCs) in the inner mitochondrial membrane with NADH-ubiquinone oxidoreductase (complex I, CI) and cytochrome c oxidase (complex IV, CIV), resulting in different assemblies (supercomplex SCI(1)III(2)IV(1) and megacomplex MCI(2)III(2)IV(2)).

It is found in the mitochondrion inner membrane. Component of the ubiquinol-cytochrome c oxidoreductase, a multisubunit transmembrane complex that is part of the mitochondrial electron transport chain which drives oxidative phosphorylation. The respiratory chain contains 3 multisubunit complexes succinate dehydrogenase (complex II, CII), ubiquinol-cytochrome c oxidoreductase (cytochrome b-c1 complex, complex III, CIII) and cytochrome c oxidase (complex IV, CIV), that cooperate to transfer electrons derived from NADH and succinate to molecular oxygen, creating an electrochemical gradient over the inner membrane that drives transmembrane transport and the ATP synthase. The cytochrome b-c1 complex catalyzes electron transfer from ubiquinol to cytochrome c, linking this redox reaction to translocation of protons across the mitochondrial inner membrane, with protons being carried across the membrane as hydrogens on the quinol. In the process called Q cycle, 2 protons are consumed from the matrix, 4 protons are released into the intermembrane space and 2 electrons are passed to cytochrome c. In Homo sapiens (Human), this protein is Cytochrome b-c1 complex subunit 6, mitochondrial (UQCRH).